The chain runs to 167 residues: General odorant-binding protein 1 (167 aa).

An N-terminal signal peptide occupies residues Met1–Ala22. 3 cysteine pairs are disulfide-bonded: Cys41–Cys76, Cys72–Cys130, and Cys119–Cys139.

The protein belongs to the PBP/GOBP family. In terms of tissue distribution, antenna.

Functionally, present in the aqueous fluid surrounding olfactory sensory dendrites and are thought to aid in the capture and transport of hydrophobic odorants into and through this fluid. The chain is General odorant-binding protein 1 from Antheraea pernyi (Chinese oak silk moth).